A 207-amino-acid chain; its full sequence is Ribonuclease HII (207 aa).

The RNase H type-2 domain maps to 18–207 (GLVAGVDEAG…VAEVLREALP (190 aa)). The a divalent metal cation site is built by D24, E25, and D116.

It belongs to the RNase HII family. It depends on Mn(2+) as a cofactor. Mg(2+) is required as a cofactor.

Its subcellular location is the cytoplasm. It carries out the reaction Endonucleolytic cleavage to 5'-phosphomonoester.. In terms of biological role, endonuclease that specifically degrades the RNA of RNA-DNA hybrids. The sequence is that of Ribonuclease HII from Albidiferax ferrireducens (strain ATCC BAA-621 / DSM 15236 / T118) (Rhodoferax ferrireducens).